The primary structure comprises 313 residues: GMP synthase [glutamine-hydrolyzing] subunit B (313 aa).

In terms of domain architecture, GMPS ATP-PPase spans 6-190 (KVWEKFIEEK…LGLPEKIYNR (185 aa)). 33–39 (SGGVDSS) provides a ligand contact to ATP.

In terms of assembly, heterodimer composed of a glutamine amidotransferase subunit (A) and a GMP-binding subunit (B).

The catalysed reaction is XMP + L-glutamine + ATP + H2O = GMP + L-glutamate + AMP + diphosphate + 2 H(+). It participates in purine metabolism; GMP biosynthesis; GMP from XMP (L-Gln route): step 1/1. Functionally, catalyzes the synthesis of GMP from XMP. In Pyrococcus furiosus (strain ATCC 43587 / DSM 3638 / JCM 8422 / Vc1), this protein is GMP synthase [glutamine-hydrolyzing] subunit B (guaAB).